We begin with the raw amino-acid sequence, 390 residues long: Aspartate beta-hydroxylase domain-containing protein 1 (390 aa).

A disordered region spans residues 1–54 (MKEGRGSFSVERGPRKERETAQSGMWKGNSPAGSQGAAMEGTGGELGGQGNWGP). Over 1-72 (MKEGRGSFSV…RASLIMLPWP (72 aa)) the chain is Cytoplasmic. The span at 41-51 (GTGGELGGQGN) shows a compositional bias: gly residues. Residues 73–95 (LPLASSALTLLFGALTSLFLWYC) traverse the membrane as a helical segment. Residues 96-390 (YRLGSQDMQA…ALDFVFAPDP (295 aa)) are Lumenal-facing. The tract at residues 116–143 (RGGPVGCSEAGGPSPGGPGDPGEGPRTE) is disordered. Residues 128–137 (PSPGGPGDPG) show a composition bias toward gly residues. Serine 129 is subject to Phosphoserine.

Belongs to the aspartyl/asparaginyl beta-hydroxylase family.

Its subcellular location is the membrane. This chain is Aspartate beta-hydroxylase domain-containing protein 1 (ASPHD1), found in Homo sapiens (Human).